Consider the following 396-residue polypeptide: Mannonate dehydratase (396 aa).

Belongs to the mannonate dehydratase family. Fe(2+) serves as cofactor. It depends on Mn(2+) as a cofactor.

The catalysed reaction is D-mannonate = 2-dehydro-3-deoxy-D-gluconate + H2O. The protein operates within carbohydrate metabolism; pentose and glucuronate interconversion. Catalyzes the dehydration of D-mannonate. In Enterobacter sp. (strain 638), this protein is Mannonate dehydratase.